We begin with the raw amino-acid sequence, 624 residues long: DNA (cytosine-5)-methyltransferase DRM1 (624 aa).

2 consecutive UBA domains span residues Arg-57–Tyr-100 and Ser-108–Tyr-149. Positions Asp-160–Ser-189 are disordered. A compositionally biased stretch (acidic residues) spans Asn-166–Leu-185. Residues Ser-188–Ala-231 form the UBA 3 domain. The SAM-dependent MTase DRM-type domain maps to Met-291–Met-622.

This sequence belongs to the class I-like SAM-binding methyltransferase superfamily. DRM-methyltransferase family.

It is found in the nucleus. It catalyses the reaction a 2'-deoxycytidine in DNA + S-adenosyl-L-methionine = a 5-methyl-2'-deoxycytidine in DNA + S-adenosyl-L-homocysteine + H(+). Functionally, involved in de novo DNA methylation. Controls asymmetric and CpNpG methylation. Required for FWA gene silencing but not for the maintenance of SUP gene silencing. Functionally redundant to CMT3 to maintain non-CpG methylation. Involved in RNA-directed DNA methylation. This chain is DNA (cytosine-5)-methyltransferase DRM1 (DRM1), found in Arabidopsis thaliana (Mouse-ear cress).